Reading from the N-terminus, the 133-residue chain is p53 and DNA damage-regulated protein 1 (133 aa).

This sequence belongs to the prefoldin subunit beta family. In terms of assembly, component of the PAQosome complex which is responsible for the biogenesis of several protein complexes and which consists of R2TP complex members RUVBL1, RUVBL2, RPAP3 and PIH1D1, URI complex members PFDN2, PFDN6, PDRG1, UXT and URI1 as well as ASDURF, POLR2E and DNAAF10/WDR92.

It localises to the cytoplasm. Its function is as follows. May play a role in chaperone-mediated protein folding. In Pongo abelii (Sumatran orangutan), this protein is p53 and DNA damage-regulated protein 1 (PDRG1).